The sequence spans 153 residues: Large ribosomal subunit protein uL13 (153 aa).

Belongs to the universal ribosomal protein uL13 family. As to quaternary structure, part of the 50S ribosomal subunit.

Its function is as follows. This protein is one of the early assembly proteins of the 50S ribosomal subunit, although it is not seen to bind rRNA by itself. It is important during the early stages of 50S assembly. The polypeptide is Large ribosomal subunit protein uL13 (Xanthobacter autotrophicus (strain ATCC BAA-1158 / Py2)).